A 274-amino-acid polypeptide reads, in one-letter code: ATP synthase subunit delta (274 aa).

The protein belongs to the ATPase delta chain family. F-type ATPases have 2 components, F(1) - the catalytic core - and F(0) - the membrane proton channel. F(1) has five subunits: alpha(3), beta(3), gamma(1), delta(1), epsilon(1). F(0) has three main subunits: a(1), b(2) and c(10-14). The alpha and beta chains form an alternating ring which encloses part of the gamma chain. F(1) is attached to F(0) by a central stalk formed by the gamma and epsilon chains, while a peripheral stalk is formed by the delta and b chains.

The protein localises to the cell membrane. Its function is as follows. F(1)F(0) ATP synthase produces ATP from ADP in the presence of a proton or sodium gradient. F-type ATPases consist of two structural domains, F(1) containing the extramembraneous catalytic core and F(0) containing the membrane proton channel, linked together by a central stalk and a peripheral stalk. During catalysis, ATP synthesis in the catalytic domain of F(1) is coupled via a rotary mechanism of the central stalk subunits to proton translocation. This protein is part of the stalk that links CF(0) to CF(1). It either transmits conformational changes from CF(0) to CF(1) or is implicated in proton conduction. This chain is ATP synthase subunit delta, found in Streptomyces coelicolor (strain ATCC BAA-471 / A3(2) / M145).